The sequence spans 517 residues: Serine carboxypeptidase ctsa-3.2 (517 aa).

The signal sequence occupies residues 1–21 (MWWTSLVFSVLLFDLIFISNC). Residue Ser172 is part of the active site. N-linked (GlcNAc...) asparagine glycosylation occurs at Asn269. Catalysis depends on residues Asp418 and His485.

Belongs to the peptidase S10 family.

The protein is Serine carboxypeptidase ctsa-3.2 of Caenorhabditis elegans.